A 265-amino-acid chain; its full sequence is U6 snRNA phosphodiesterase 1 (265 aa).

The interval 1–72 is disordered; it reads MSAAPLVGYS…DSTKHGGRVR (72 aa). The segment covering 20–31 has biased composition (basic and acidic residues); that stretch reads DGMRTRPGDGSH. The active-site Proton acceptor is the His-120. Position 120 to 122 (120 to 122) interacts with AMP; sequence HLS. UMP contacts are provided by residues Gln-164, Tyr-202, and 206–210; that span reads SFHLS. AMP is bound by residues Tyr-202 and 204–210; that span reads DPSFHLS. The active-site Proton donor is His-208.

The protein belongs to the 2H phosphoesterase superfamily. USB1 family. Interacts with PLRG1, CDC5L and PRPF19.

The protein resides in the nucleus. It carries out the reaction a 3'-end uridylyl-uridine-RNA = a 3'-end 2',3'-cyclophospho-uridine-RNA + uridine. The catalysed reaction is a 3'-end uridylyl-adenosine-RNA = a 3'-end 2',3'-cyclophospho-uridine-RNA + adenosine. Its activity is regulated as follows. 3'-5' RNA exonuclease activity is inhibited by a 3' phosphate terminated RNA. Its function is as follows. 3'-5' RNA exonuclease that trims the 3' end of oligo(U) and oligo(A) tracts of the pre-U6 small nuclear RNA (snRNA) molecule, leading to the formation of a mature U6 snRNA 3' end-terminated with a 2',3'-cyclic phosphate. Participates in the U6 snRNA 3' end processing that prevents U6 snRNA degradation. In addition also removes uridines from the 3' end of U6atac snRNA and possibly the vault RNA VTRNA1-1. The chain is U6 snRNA phosphodiesterase 1 from Homo sapiens (Human).